The following is a 235-amino-acid chain: Orotidine 5'-phosphate decarboxylase (235 aa).

Residues aspartate 12, lysine 34, 61–70 (DLKFHDIPNT), threonine 121, arginine 182, glutamine 191, glycine 211, and arginine 212 contribute to the substrate site. The Proton donor role is filled by lysine 63.

This sequence belongs to the OMP decarboxylase family. Type 1 subfamily. In terms of assembly, homodimer.

The enzyme catalyses orotidine 5'-phosphate + H(+) = UMP + CO2. It participates in pyrimidine metabolism; UMP biosynthesis via de novo pathway; UMP from orotate: step 2/2. In terms of biological role, catalyzes the decarboxylation of orotidine 5'-monophosphate (OMP) to uridine 5'-monophosphate (UMP). The polypeptide is Orotidine 5'-phosphate decarboxylase (Marinomonas sp. (strain MWYL1)).